Reading from the N-terminus, the 425-residue chain is Neuromedin-U receptor 1 (425 aa).

Over 1–59 (MTPPCLNCSFFPGQLSPNASTGLLSCNDSEFKEHFDLEDLNLTHEDLRLKYLGPQQVKQ) the chain is Extracellular. Asn-41 is a glycosylation site (N-linked (GlcNAc...) asparagine). The helical transmembrane segment at 60–80 (FLPICVTYLLIFVVGTLGNGL) threads the bilayer. At 81–96 (TCTVILRQKAMHTPTN) the chain is on the cytoplasmic side. The chain crosses the membrane as a helical span at residues 97 to 117 (FYLFSLAVSDLLVLLVGLPLE). Residues 118–137 (LYEMQHNYPFQLGAGGCYFR) lie on the Extracellular side of the membrane. Residues Cys-134 and Cys-219 are joined by a disulfide bond. A helical transmembrane segment spans residues 138–158 (ILLLETVCLASVLNVTALSVE). At 159–181 (RYVAVVHPLQAKSVMTRTHVRRM) the chain is on the cytoplasmic side. A helical membrane pass occupies residues 182-202 (LGAIWVFAILFSLPNTSLHGL). At 203–235 (SPLYVPCRGPVPDSVTCTLVRPQFFYKLVIQTT) the chain is on the extracellular side. A helical membrane pass occupies residues 236–256 (ILLFFCLPMVTISVLYLLIGL). Over 257-294 (RLRRERILLQEEVKGRISAAARQASHRSIQLRDRERRQ) the chain is Cytoplasmic. Residues 295–315 (VTKMLIALVIVFGTCWVPFHA) traverse the membrane as a helical segment. Over 316 to 331 (DRLMWSMVSHWTDGLR) the chain is Extracellular. A helical membrane pass occupies residues 332–352 (LAFQSVHLASGVFLYLGSAAN). Over 353-425 (PVLYNLMSTR…GCEQETDPPE (73 aa)) the chain is Cytoplasmic. Positions 406 to 425 (DVPLAENRDPGCEQETDPPE) are disordered.

This sequence belongs to the G-protein coupled receptor 1 family. In terms of tissue distribution, highly expressed in the small intestine and lung. Low expression in the central nervous system.

It localises to the cell membrane. Receptor for the neuromedin-U and neuromedin-S neuropeptides. The sequence is that of Neuromedin-U receptor 1 (Nmur1) from Rattus norvegicus (Rat).